Consider the following 126-residue polypeptide: Small ribosomal subunit protein uS12m (126 aa).

Positions Met1–Thr11 are enriched in polar residues. The segment at Met1–Lys21 is disordered. The span at Arg12–Lys21 shows a compositional bias: basic residues.

The protein belongs to the universal ribosomal protein uS12 family.

The protein localises to the mitochondrion. In terms of biological role, protein S12 is involved in the translation initiation step. The protein is Small ribosomal subunit protein uS12m (RPS12) of Bigelowiella natans (Pedinomonas minutissima).